Here is a 403-residue protein sequence, read N- to C-terminus: Double C2-like domain-containing protein alpha (403 aa).

The interaction with UNC13D and DYNLT1 stretch occupies residues 1-92; that stretch reads MRGRRGDRMT…DSYDSDDTTA (92 aa). 2 consecutive C2 domains span residues 92 to 214 and 254 to 387; these read ALGT…HFNI and ERGR…ERWH. Ca(2+) contacts are provided by D123, D129, D184, D186, D285, D291, D345, D347, and D353. Residues 218 to 403 form an interaction with UNC13D region; that stretch reads RQVPLPSPSS…PPAAGALPLA (186 aa).

In terms of assembly, interacts (via N-terminus) with UNC13A. Interacts with cytoplasmic dynein light chain DYNLT1. Interacts with UNC13D. Requires Ca(2+) as cofactor. As to expression, predominantly expressed in brain. Also found in non-neural tissues. Expressed in RBL-2H3 mast cell line.

It is found in the cytoplasmic vesicle. Its subcellular location is the secretory vesicle. The protein localises to the synaptic vesicle membrane. The protein resides in the synapse. It localises to the synaptosome. It is found in the lysosome. Functionally, calcium sensor which most probably regulates fusion of vesicles with membranes. Binds calcium and phospholipids. May be involved in calcium dependent neurotransmitter release through the interaction with UNC13A. May be involved in calcium-dependent spontaneous release of neurotransmitter in absence of action potentials in neuronal cells. Regulates Ca(2+)-dependent secretory lysosome exocytosis in mast cells. This Rattus norvegicus (Rat) protein is Double C2-like domain-containing protein alpha (Doc2a).